The chain runs to 193 residues: MIGRIAGILLEKNPPHLLVDCNGVGYEIDVPMSTFYNLPQTGERVVLLTQQIVREDAHLLYGFLTPQERTTFRELLKITGIGARMALAVLSGMSVQELAQAVTMQDAARLTRLPGIGKKTAERLLLELKGKLGADLGALAGAASQSDHATDILNALVALGYSEKEGLAAIKNVPAGTGVSEGIKLALKALSKV.

Positions 1 to 64 (MIGRIAGILL…EDAHLLYGFL (64 aa)) are domain I. Positions 65-139 (TPQERTTFRE…GKLGADLGAL (75 aa)) are domain II. A flexible linker region spans residues 139–143 (LAGAA). The segment at 144-193 (SQSDHATDILNALVALGYSEKEGLAAIKNVPAGTGVSEGIKLALKALSKV) is domain III.

It belongs to the RuvA family. In terms of assembly, homotetramer. Forms an RuvA(8)-RuvB(12)-Holliday junction (HJ) complex. HJ DNA is sandwiched between 2 RuvA tetramers; dsDNA enters through RuvA and exits via RuvB. An RuvB hexamer assembles on each DNA strand where it exits the tetramer. Each RuvB hexamer is contacted by two RuvA subunits (via domain III) on 2 adjacent RuvB subunits; this complex drives branch migration. In the full resolvosome a probable DNA-RuvA(4)-RuvB(12)-RuvC(2) complex forms which resolves the HJ.

It is found in the cytoplasm. In terms of biological role, the RuvA-RuvB-RuvC complex processes Holliday junction (HJ) DNA during genetic recombination and DNA repair, while the RuvA-RuvB complex plays an important role in the rescue of blocked DNA replication forks via replication fork reversal (RFR). RuvA specifically binds to HJ cruciform DNA, conferring on it an open structure. The RuvB hexamer acts as an ATP-dependent pump, pulling dsDNA into and through the RuvAB complex. HJ branch migration allows RuvC to scan DNA until it finds its consensus sequence, where it cleaves and resolves the cruciform DNA. The protein is Holliday junction branch migration complex subunit RuvA of Burkholderia ambifaria (strain MC40-6).